The sequence spans 372 residues: Glutamine synthetase (372 aa).

The GS beta-grasp domain maps to 26 to 105 (IIAEYVWIDS…VLAECWNNDG (80 aa)). One can recognise a GS catalytic domain in the interval 112 to 372 (HRHEAAKLFE…MTKEYERESL (261 aa)).

This sequence belongs to the glutamine synthetase family. In terms of assembly, homooctamer.

It is found in the cytoplasm. It carries out the reaction L-glutamate + NH4(+) + ATP = L-glutamine + ADP + phosphate + H(+). The polypeptide is Glutamine synthetase (GLN1) (Kluyveromyces lactis (strain ATCC 8585 / CBS 2359 / DSM 70799 / NBRC 1267 / NRRL Y-1140 / WM37) (Yeast)).